The following is a 304-amino-acid chain: Acetyl-coenzyme A carboxylase carboxyl transferase subunit beta (304 aa).

A CoA carboxyltransferase N-terminal domain is found at 23-292 (VWTKCDSCGQ…PNPEAPREGV (270 aa)). Residues cysteine 27, cysteine 30, cysteine 46, and cysteine 49 each contribute to the Zn(2+) site. The C4-type zinc-finger motif lies at 27–49 (CDSCGQVLYRAELERNLEVCPKC). The tract at residues 284–304 (NPEAPREGVVVPPVPDQEPEA) is disordered. Positions 295–304 (PPVPDQEPEA) are enriched in pro residues.

This sequence belongs to the AccD/PCCB family. As to quaternary structure, acetyl-CoA carboxylase is a heterohexamer composed of biotin carboxyl carrier protein (AccB), biotin carboxylase (AccC) and two subunits each of ACCase subunit alpha (AccA) and ACCase subunit beta (AccD). Zn(2+) serves as cofactor.

It localises to the cytoplasm. The catalysed reaction is N(6)-carboxybiotinyl-L-lysyl-[protein] + acetyl-CoA = N(6)-biotinyl-L-lysyl-[protein] + malonyl-CoA. Its pathway is lipid metabolism; malonyl-CoA biosynthesis; malonyl-CoA from acetyl-CoA: step 1/1. Its function is as follows. Component of the acetyl coenzyme A carboxylase (ACC) complex. Biotin carboxylase (BC) catalyzes the carboxylation of biotin on its carrier protein (BCCP) and then the CO(2) group is transferred by the transcarboxylase to acetyl-CoA to form malonyl-CoA. The polypeptide is Acetyl-coenzyme A carboxylase carboxyl transferase subunit beta (Shigella boydii serotype 4 (strain Sb227)).